A 156-amino-acid chain; its full sequence is ATP synthase subunit b', organellar chromatophore (156 aa).

Residues 23-43 (TLPLMAIQVVFLTFILNAIFF) form a helical membrane-spanning segment.

The protein belongs to the ATPase B chain family. In terms of assembly, F-type ATPases have 2 components, F(1) - the catalytic core - and F(0) - the membrane proton channel. F(1) has five subunits: alpha(3), beta(3), gamma(1), delta(1), epsilon(1). F(0) has four main subunits: a(1), b(1), b'(1) and c(10-14). The alpha and beta chains form an alternating ring which encloses part of the gamma chain. F(1) is attached to F(0) by a central stalk formed by the gamma and epsilon chains, while a peripheral stalk is formed by the delta, b and b' chains.

Its subcellular location is the plastid. It localises to the organellar chromatophore thylakoid membrane. In terms of biological role, f(1)F(0) ATP synthase produces ATP from ADP in the presence of a proton or sodium gradient. F-type ATPases consist of two structural domains, F(1) containing the extramembraneous catalytic core and F(0) containing the membrane proton channel, linked together by a central stalk and a peripheral stalk. During catalysis, ATP synthesis in the catalytic domain of F(1) is coupled via a rotary mechanism of the central stalk subunits to proton translocation. Functionally, component of the F(0) channel, it forms part of the peripheral stalk, linking F(1) to F(0). The b'-subunit is a diverged and duplicated form of b found in plants and photosynthetic bacteria. This is ATP synthase subunit b', organellar chromatophore from Paulinella chromatophora.